Here is a 128-residue protein sequence, read N- to C-terminus: uncharacterized protein (128 aa).

3 helical membrane passes run methionine 19–serine 41, leucine 54–glutamine 71, and proline 75–leucine 97.

The protein resides in the cell membrane. This is an uncharacterized protein from Pasteurella multocida (strain Pm70).